The following is a 3110-amino-acid chain: Huntingtin (3110 aa).

Positions Met1–Arg58 are disordered. Lys2 carries the post-translational modification N6-acetyllysine. Over residues Gln18–Ala52 the composition is skewed to pro residues. An N6-acetyllysine mark is found at Lys146 and Lys204. HEAT repeat units lie at residues Pro174–Asn211 and Asn216–Arg253. Lys313 bears the N6-acetyllysine mark. Phosphoserine is present on residues Ser387, Ser389, and Ser402. Residue Lys412 is modified to N6-acetyllysine. The interval Gly462–Gln473 is interaction with ZDHHC17. A disordered region spans residues Asp487 to Ser549. Residues Asp521–Ser549 are compositionally biased toward polar residues. Gly522 is lipidated: N-myristoyl glycine. Residues Ser611 and Ser614 each carry the phosphoserine modification. HEAT repeat units follow at residues Phe773–Ser810 and Lys873–Tyr911. Residues Lys1137–Ser1195 form a disordered region. The segment covering Leu1140 to Pro1151 has biased composition (low complexity). Phosphoserine; by CDK5 occurs at positions 1150 and 1170. The span at Ser1178–Ser1195 shows a compositional bias: polar residues. An HEAT 5 repeat occupies Leu1395 to Asn1432. At Ser1845 the chain carries Phosphoserine. A Nuclear export signal motif is present at residues Ile2363–Leu2372. A disordered region spans residues Glu2601–Arg2628. Over residues Glu2602–Asp2613 the composition is skewed to acidic residues.

Belongs to the huntingtin family. As to quaternary structure, interacts with PFN1. Interacts through its N-terminus with PRPF40A. Interacts with PQBP1. Interacts with SETD2. Interacts with SH3GLB1. Interacts with SYVN. Interacts with TPR; the interaction is inhibited by forms of Huntingtin with expanded polyglutamine stretch. Interacts with ZDHHC13 (via ANK repeats). Interacts with ZDHHC17 (via ANK repeats). Interacts with F8A1/F8A2/F8A3. Found in a complex with F8A1/F8A2/F8A3, HTT and RAB5A; mediates the recruitment of HTT by RAB5A. Phosphorylation at Ser-1150 and Ser-1170 by CDK5 in response to DNA damage in nuclei of neurons protects neurons against polyglutamine expansion as well as DNA damage mediated toxicity. In terms of processing, cleaved by caspases downstream of the polyglutamine stretch. Post-translationally, myristoylated at Gly-522, following proteolytic cleavage at Asp-521. As to expression, expressed to a high degree in all the regions of the brain of adults and in meiotic cells of the testis. In addition, very low levels are detected in various non-neuronal tissues (heart, muscle, liver, lung and kidney).

It is found in the cytoplasm. The protein resides in the nucleus. Its subcellular location is the cytoplasmic vesicle. The protein localises to the autophagosome. Functionally, may play a role in microtubule-mediated transport or vesicle function. Its function is as follows. Promotes the formation of autophagic vesicles. This is Huntingtin (Htt) from Rattus norvegicus (Rat).